A 188-amino-acid chain; its full sequence is Elongation factor P (188 aa).

K34 bears the N6-(3,6-diaminohexanoyl)-5-hydroxylysine mark.

This sequence belongs to the elongation factor P family. May be beta-lysylated on the epsilon-amino group of Lys-34 by the combined action of EpmA and EpmB, and then hydroxylated on the C5 position of the same residue by EpmC (if this protein is present). Lysylation is critical for the stimulatory effect of EF-P on peptide-bond formation. The lysylation moiety may extend toward the peptidyltransferase center and stabilize the terminal 3-CCA end of the tRNA. Hydroxylation of the C5 position on Lys-34 may allow additional potential stabilizing hydrogen-bond interactions with the P-tRNA.

The protein resides in the cytoplasm. Its pathway is protein biosynthesis; polypeptide chain elongation. Its function is as follows. Involved in peptide bond synthesis. Alleviates ribosome stalling that occurs when 3 or more consecutive Pro residues or the sequence PPG is present in a protein, possibly by augmenting the peptidyl transferase activity of the ribosome. Modification of Lys-34 is required for alleviation. In Histophilus somni (strain 129Pt) (Haemophilus somnus), this protein is Elongation factor P.